Consider the following 794-residue polypeptide: Protein transport protein SEC23 G (794 aa).

Zn(2+)-binding residues include Cys56, Cys59, Cys78, and Cys81. The tract at residues 56–81 (CSRCGAVLNPYARVDYQSRIWSCPFC) is zinc finger-like.

It belongs to the SEC23/SEC24 family. SEC23 subfamily. As to quaternary structure, component of the coat protein complex II (COPII), composed of at least five proteins: the Sec23/24 complex, the Sec13/31 complex and Sar1. Interacts with SEC24A.

It localises to the cytoplasmic vesicle. The protein localises to the COPII-coated vesicle membrane. It is found in the endoplasmic reticulum membrane. Its subcellular location is the membrane. Component of the coat protein complex II (COPII) which promotes the formation of transport vesicles from the endoplasmic reticulum (ER). The coat has two main functions, the physical deformation of the endoplasmic reticulum membrane into vesicles and the selection of cargo molecules. The protein is Protein transport protein SEC23 G of Arabidopsis thaliana (Mouse-ear cress).